Reading from the N-terminus, the 301-residue chain is N-acetylmuramic acid 6-phosphate etherase (301 aa).

Residues Val57–Lys220 form the SIS domain. The Proton donor role is filled by Glu85. The active site involves Glu116.

It belongs to the GCKR-like family. MurNAc-6-P etherase subfamily. As to quaternary structure, homodimer.

The catalysed reaction is N-acetyl-D-muramate 6-phosphate + H2O = N-acetyl-D-glucosamine 6-phosphate + (R)-lactate. The protein operates within amino-sugar metabolism; N-acetylmuramate degradation. Specifically catalyzes the cleavage of the D-lactyl ether substituent of MurNAc 6-phosphate, producing GlcNAc 6-phosphate and D-lactate. The sequence is that of N-acetylmuramic acid 6-phosphate etherase from Rubrobacter xylanophilus (strain DSM 9941 / JCM 11954 / NBRC 16129 / PRD-1).